A 410-amino-acid chain; its full sequence is Pyruvate dehydrogenase complex protein X component, mitochondrial (410 aa).

Residues 1 to 30 (MLSAISKVSTLKSCTRYLTKCNYHASAKLL) constitute a mitochondrion transit peptide. A Lipoyl-binding domain is found at 32–108 (VKTFSMPAMS…DVGEPIAYIA (77 aa)). Residue Lys-73 is modified to N6-lipoyllysine. One can recognise a Peripheral subunit-binding (PSBD) domain in the interval 169–210 (TLLPSVSLLLAENNISKQKALKEIAPSGSNGRLLKGDVLAYL).

It belongs to the 2-oxoacid dehydrogenase family. As to quaternary structure, eukaryotic pyruvate dehydrogenase (PDH) complexes are organized as a core consisting of the oligomeric dihydrolipoamide acetyl-transferase (E2), around which are arranged multiple copies of pyruvate dehydrogenase (E1), dihydrolipoamide dehydrogenase (E3) and protein X (E3BP) bound by non-covalent bonds.

The protein localises to the mitochondrion matrix. In terms of biological role, required for anchoring dihydrolipoamide dehydrogenase (E3) to the dihydrolipoamide transacetylase (E2) core of the pyruvate dehydrogenase complexes of eukaryotes. This specific binding is essential for a functional PDH complex. In Saccharomyces cerevisiae (strain ATCC 204508 / S288c) (Baker's yeast), this protein is Pyruvate dehydrogenase complex protein X component, mitochondrial (PDX1).